The primary structure comprises 621 residues: Kelch-like protein 40 (621 aa).

In terms of domain architecture, BTB spans 33–98 (LDCVVRAGER…LYTSEIALDE (66 aa)). The BACK domain maps to 133-239 (CLAVFRLGLL…PRAFLESRVE (107 aa)). Positions 265 to 295 (ITTLRKKKKGKDGAGAKEADKGTSKAKAEED) are disordered. A compositionally biased stretch (basic and acidic residues) spans 275 to 292 (KDGAGAKEADKGTSKAKA). Kelch repeat units follow at residues 360 to 412 (QVFV…EALN), 413 to 462 (SIYV…SHMD), 463 to 510 (LVYV…VHDG), 512 to 557 (IIVA…SLVG), and 559 to 613 (LYAI…PVRL).

It belongs to the KLHL40 family. In terms of assembly, component of the BCR(KLHL40) E3 ubiquitin ligase complex, at least composed of CUL3, KLHL40 and RBX1. Interacts with LMOD3. Highly expressed in fetal (19, 23 and 31 weeks of gestation) and adult skeletal muscle; expression levels tend to be higher in fetal compared to postnatal muscles (at protein level). Also expressed in fetal and adult heart.

It localises to the cytoplasm. It is found in the myofibril. The protein resides in the sarcomere. The protein localises to the a band. Its subcellular location is the i band. Its function is as follows. Substrate-specific adapter of a BCR (BTB-CUL3-RBX1) E3 ubiquitin ligase complex that acts as a key regulator of skeletal muscle development. The BCR(KLHL40) complex acts by mediating ubiquitination and degradation of TFDP1, thereby regulating the activity of the E2F:DP transcription factor complex. Promotes stabilization of LMOD3 by acting as a negative regulator of LMOD3 ubiquitination; the molecular process by which it negatively regulates ubiquitination of LMOD3 is however unclear. The protein is Kelch-like protein 40 of Homo sapiens (Human).